The chain runs to 533 residues: T-complex protein 1 subunit delta (533 aa).

The interval Met-1–Asp-26 is disordered. Over residues Ser-16 to Asp-26 the composition is skewed to basic and acidic residues.

This sequence belongs to the TCP-1 chaperonin family. As to quaternary structure, heterooligomeric complex of about 850 to 900 kDa that forms two stacked rings, 12 to 16 nm in diameter.

It is found in the cytoplasm. Functionally, molecular chaperone; assists the folding of proteins upon ATP hydrolysis. Known to play a role, in vitro, in the folding of actin and tubulin. The sequence is that of T-complex protein 1 subunit delta (cct4) from Dictyostelium discoideum (Social amoeba).